The primary structure comprises 221 residues: ATP phosphoribosyltransferase (221 aa).

Belongs to the ATP phosphoribosyltransferase family. Short subfamily. As to quaternary structure, heteromultimer composed of HisG and HisZ subunits.

Its subcellular location is the cytoplasm. It catalyses the reaction 1-(5-phospho-beta-D-ribosyl)-ATP + diphosphate = 5-phospho-alpha-D-ribose 1-diphosphate + ATP. Its pathway is amino-acid biosynthesis; L-histidine biosynthesis; L-histidine from 5-phospho-alpha-D-ribose 1-diphosphate: step 1/9. In terms of biological role, catalyzes the condensation of ATP and 5-phosphoribose 1-diphosphate to form N'-(5'-phosphoribosyl)-ATP (PR-ATP). Has a crucial role in the pathway because the rate of histidine biosynthesis seems to be controlled primarily by regulation of HisG enzymatic activity. In Anaeromyxobacter dehalogenans (strain 2CP-C), this protein is ATP phosphoribosyltransferase.